Consider the following 422-residue polypeptide: MDEQGRLMQARGVGIPGHPIHGGPQTLTPHPMHEPPADNGEPRKQDIGDILQQIMTITDQSLDEAQAKKHALNCHRMKPALFSVLCEIKEKTGLSIRNTQEEEPVDPQLMRLDNMLLAEGVAGPEKGGGSAAAAAAAAASGGVSPDNSIEHSDYRNKLSQIRQIYHAELEKYEQACNEFTTHVMNLLREQSRTRPISPKEIERMVGIIHRKFSSIQMQLKQSTCEAVMILRSRFLDARRKRRNFSKQATEVLNEYFYSHLSNPYPSEEAKEELAKKCGITVSQVSNWFGNKRIRYKKNIGKFQEEANIYAVKTAVSVAQGGHSGANSPTTPTSAGSGGSFNLSGSNDMFMAMQGLNGDSYPPSQVESLRHTMGPGYSDSLSANQMYSPREIRANGGWQEAVTPSSVTSPTEGPGSVHSDTSN.

Residues 1-43 form a disordered region; it reads MDEQGRLMQARGVGIPGHPIHGGPQTLTPHPMHEPPADNGEPR. The segment covering 31 to 43 has biased composition (basic and acidic residues); sequence PMHEPPADNGEPR. Residues 42 to 236 form the PBC domain; sequence PRKQDIGDIL…VMILRSRFLD (195 aa). The PBC-A stretch occupies residues 49–128; that stretch reads DILQQIMTIT…EGVAGPEKGG (80 aa). Residues 131–236 are PBC-B; that stretch reads AAAAAAAAAS…VMILRSRFLD (106 aa). Residues 237-299 constitute a DNA-binding region (homeobox); sequence ARRKRRNFSK…NKRIRYKKNI (63 aa). Disordered regions lie at residues 319-341 and 353-422; these read QGGH…GSFN and QGLN…DTSN. Positions 401 to 410 are enriched in polar residues; the sequence is VTPSSVTSPT.

It belongs to the TALE/PBX homeobox family.

It is found in the nucleus. In terms of biological role, transcriptional activator that binds the sequence 5'-ATCAATCAA-3'. In Xenopus tropicalis (Western clawed frog), this protein is Pre-B-cell leukemia transcription factor 2.